A 280-amino-acid chain; its full sequence is Probable N-acetyltransferase 14 (280 aa).

2 helical membrane-spanning segments follow: residues 37 to 57 (LILHLLTRPLALLLLAILSSI) and 60 to 80 (CVLHSFVLALVIPVFISVIYL). The disordered stretch occupies residues 111–152 (PDLPNPHLGRAKLTTNQEKTRRRKKAKEKEKMNESEQVDEDE). The region spanning 116 to 273 (PHLGRAKLTT…EKGWLGYPLT (158 aa)) is the N-acetyltransferase domain.

Belongs to the camello family.

The protein resides in the membrane. Probable acetyltransferase. In Danio rerio (Zebrafish), this protein is Probable N-acetyltransferase 14 (nat14).